The sequence spans 481 residues: Eukaryotic translation initiation factor 3 subunit L (481 aa).

The disordered stretch occupies residues 1 to 22 (MSVDARTAYPGSRPPANMQDES). Residues 262–457 (DAIRTFSHIL…DLDYAIEGNL (196 aa)) form the PCI domain.

Belongs to the eIF-3 subunit L family. As to quaternary structure, component of the eukaryotic translation initiation factor 3 (eIF-3) complex.

It localises to the cytoplasm. In terms of biological role, component of the eukaryotic translation initiation factor 3 (eIF-3) complex, which is involved in protein synthesis of a specialized repertoire of mRNAs and, together with other initiation factors, stimulates binding of mRNA and methionyl-tRNAi to the 40S ribosome. The eIF-3 complex specifically targets and initiates translation of a subset of mRNAs involved in cell proliferation. The polypeptide is Eukaryotic translation initiation factor 3 subunit L (Coccidioides immitis (strain RS) (Valley fever fungus)).